A 32-amino-acid chain; its full sequence is Calichemicin antitumor antibiotic biosynthesis protein (32 aa).

This is Calichemicin antitumor antibiotic biosynthesis protein from Micromonospora echinospora (Micromonospora purpurea).